Consider the following 181-residue polypeptide: Immunity-related GTPase family M protein (181 aa).

The IRG-type G domain occupies 32-181 (TPVNITMAGD…NLQKERVCEY (150 aa)). GTP-binding positions include 41–48 (DSGNGMST), 66–70 (TELVK), and 147–149 (KLD).

The protein belongs to the TRAFAC class dynamin-like GTPase superfamily. IRG family. Interacts with ULK1; promoting the coassembly of ULK1 and BECN1. Interacts with BECN1; enhancing BECN1-interacting partners and influencing the composition of the BECN1 complex. Interacts with ATG16L1. Interacts with NOD2; promoting IRGM 'Lys-63'-linked polyubiquitination, which is required for interactions with the core autophagy factors. Interacts with STX17; promoting STX17 recruitment to autophagosomes. Interacts with ATG8 proteins (GABARAP, GABARAPL1, GABARAPL2, MAP1LC3A, MAP1LC3B and MAP1LC3C); promoting STX17 recruitment to autophagosomes. Interacts with TFEB; promoting association between TFEB and PPP3CB and TFEB dephosphorylation. Interacts with PPP3CB; promoting association between TFEB and PPP3CB and TFEB dephosphorylation. Interacts with NLRP3; preventing NLRP3 inflammasome assembly and promoting SQSTM1/p62-dependent autophagic degradation of NLRP3. Interacts with CGAS; promoting SQSTM1/p62-dependent autophagic degradation of CGAS. Interacts with RIGI/RIG-I; promoting SQSTM1/p62-dependent autophagic degradation of RIGI/RIG-I. Interacts with NOD1; promoting SQSTM1/p62-dependent autophagic degradation of RIGI/RIG-I. Interacts with NOD2; promoting SQSTM1/p62-dependent autophagic degradation of RIGI/RIG-I. Interacts with RIPK2; promoting SQSTM1/p62-dependent autophagic degradation of RIGI/RIG-I. Ubiquitinated via 'Lys-63'-linked polyubiquitination in a NOD2-dependent process. 'Lys-63'-linked polyubiquitination is required for interactions with the core autophagy factors. Widely expressed (at protein level). Expressed in several tissues including colon, small bowel and peripheral blood leukocytes.

It localises to the golgi apparatus membrane. It is found in the cell membrane. The protein localises to the cytoplasmic vesicle. The protein resides in the phagosome membrane. Its subcellular location is the autophagosome membrane. It localises to the lysosome membrane. It is found in the late endosome membrane. The protein localises to the mitochondrion membrane. The protein resides in the cell projection. Its subcellular location is the phagocytic cup. It localises to the mitochondrion. It carries out the reaction GTP + H2O = GDP + phosphate + H(+). In terms of biological role, immunity-related GTPase that plays important roles in innate immunity and inflammatory response. Acts as a dynamin-like protein that binds to intracellular membranes and promotes remodeling and trafficking of those membranes. Required for clearance of acute protozoan and bacterial infections by interacting with autophagy and lysosome regulatory proteins, thereby promoting the fusion of phagosomes with lysosomes for efficient degradation of cargo including microbes. Regulates selective autophagy, including xenophagy and mitophagy, both directly and indirectly. Directly regulates autophagy by acting as a molecular adapter that promotes the coassembly of the core autophagy machinery to mediate antimicrobial defense: IRGM (1) activates AMPK, which in turn phosphorylates ULK1 and BECN1 to induce autophagy, (2) promotes the coassembly of ULK1 and BECN1, enhancing BECN1-interacting partners and (3) influences the composition of the BECN1 complex, by competing with the negative regulators BCL2 and RUBCN, to trigger autophagy. Also activates autophagy by promoting recruitment of STX17 to autophagosomes. In collaboration with ATG8 proteins, regulate lysosomal biogenesis, a fundamental process for any autophagic pathway, by promoting TFEB dephosphorylation. Also modulates autophagy by assisting with autophagosome formation and preventing lysosomal deacidification. While activating autophagy, acts as a key negative regulator of the inflammatory and interferon responses both by (1) promoting mitophagy and (2) mediating autophagy-dependent degradation of effectors of the inflammatory response. Promotes degradation of damaged and IFNG/IFN-gamma-stressed mitochondria via mitophagy, preventing cytosolic release of ligands that activate inflammation. Acts as a suppressor of inflammation by promoting recruitment of inflammation effectors, such as CGAS, RIGI/RIG-I and NLRP3, to autophagosome membranes, leading to their SQSTM1/p62-dependent autophagic degradation. Also directly inhibits assembly of the NLRP3 inflammasome by preventing the association between NLRP3 and PYCARD. Acts as a negative regulator of antiviral innate immune response by suppressing the RIPK2-dependent pro-inflammatory response: mediates recruitment of RIPosomes, composed of RIPK2 and NOD1 or NOD2, to autophagosome membranes, promoting their SQSTM1/p62-dependent autophagic degradation. Acts as a positive regulator of mitophagy in response to intracellular mycobacteria infection: specifically binds cardiolipin, leading to its translocation to mitochondria, where it promotes affected mitochondrial fission and mitophagy. Its function is as follows. (Microbial infection) Following infection by hepatitis C virus (HCV), promotes HCV-triggered membrane remodeling, leading to autophagy and Golgi fragmentation, a step required for HCV replication. The sequence is that of Immunity-related GTPase family M protein from Homo sapiens (Human).